The sequence spans 187 residues: UPF0301 protein Ppha_2142 (187 aa).

It belongs to the UPF0301 (AlgH) family.

This Pelodictyon phaeoclathratiforme (strain DSM 5477 / BU-1) protein is UPF0301 protein Ppha_2142.